The chain runs to 364 residues: Aminomethyltransferase (364 aa).

It belongs to the GcvT family. As to quaternary structure, the glycine cleavage system is composed of four proteins: P, T, L and H.

It carries out the reaction N(6)-[(R)-S(8)-aminomethyldihydrolipoyl]-L-lysyl-[protein] + (6S)-5,6,7,8-tetrahydrofolate = N(6)-[(R)-dihydrolipoyl]-L-lysyl-[protein] + (6R)-5,10-methylene-5,6,7,8-tetrahydrofolate + NH4(+). Functionally, the glycine cleavage system catalyzes the degradation of glycine. In Shewanella sp. (strain MR-4), this protein is Aminomethyltransferase.